Consider the following 200-residue polypeptide: 3-isopropylmalate dehydratase small subunit (200 aa).

It belongs to the LeuD family. LeuD type 1 subfamily. As to quaternary structure, heterodimer of LeuC and LeuD.

It carries out the reaction (2R,3S)-3-isopropylmalate = (2S)-2-isopropylmalate. The protein operates within amino-acid biosynthesis; L-leucine biosynthesis; L-leucine from 3-methyl-2-oxobutanoate: step 2/4. Catalyzes the isomerization between 2-isopropylmalate and 3-isopropylmalate, via the formation of 2-isopropylmaleate. This is 3-isopropylmalate dehydratase small subunit from Pectobacterium carotovorum subsp. carotovorum (strain PC1).